The chain runs to 233 residues: Large ribosomal subunit protein uL1 (233 aa).

It belongs to the universal ribosomal protein uL1 family. As to quaternary structure, part of the 50S ribosomal subunit.

In terms of biological role, binds directly to 23S rRNA. The L1 stalk is quite mobile in the ribosome, and is involved in E site tRNA release. Protein L1 is also a translational repressor protein, it controls the translation of the L11 operon by binding to its mRNA. In Psychrobacter arcticus (strain DSM 17307 / VKM B-2377 / 273-4), this protein is Large ribosomal subunit protein uL1.